The primary structure comprises 920 residues: Rho GTPase-activating protein REN1 (920 aa).

The span at 1 to 10 shows a compositional bias: polar residues; the sequence is MANKNAESSS. Positions 1–64 are disordered; sequence MANKNAESSS…SRGGNTVFKS (64 aa). Positions 17 to 31 are enriched in low complexity; the sequence is QPNQQQQQQPPIANE. Residues 45–64 are compositionally biased toward polar residues; that stretch reads PAQSGNTDSRSRGGNTVFKS. Residues 60 to 167 enclose the PH domain; the sequence is TVFKSGPLSI…WKAALENALT (108 aa). The Rho-GAP domain maps to 213 to 412; the sequence is LALEDVDGAP…TLLEEYESIF (200 aa). Disordered regions lie at residues 417 to 592, 719 to 825, and 837 to 920; these read LSPG…NLSM, RLGH…ALSK, and RSQI…TFSR. Acidic residues predominate over residues 434–463; it reads EGSDDEEYDDDDDGSQGSEDYTDEEEDLEN. Over residues 464-473 the composition is skewed to polar residues; it reads ESNGSYSESA. Basic and acidic residues-rich tracts occupy residues 475–491, 499–509, and 520–532; these read SEDKYADSIDPDDHKIN, KSPKRSKEPKK, and PRHDDGKKDEDIV. The segment covering 555–568 has biased composition (polar residues); that stretch reads SSTSDVASDTQKPS. Residues 577–586 are compositionally biased toward basic residues; sequence SKRHWGRTPG. Residues 598-728 adopt a coiled-coil conformation; the sequence is SVEVDEDNAD…RLGHHDGKAS (131 aa). 2 stretches are compositionally biased toward basic and acidic residues: residues 734–768 and 776–788; these read ASKESRKLPEHNAKMKEKQKDTEAASTHISERSTS and RENETEKQQDSRS. Low complexity predominate over residues 814-825; sequence EGSTTTTSALSK. 2 stretches are compositionally biased toward polar residues: residues 854-864 and 872-885; these read GQPSPTSGQNR and GSGSNQDPDSSKLQ. Positions 889 to 903 are enriched in basic and acidic residues; that stretch reads ILDRGRSENGGDRGR. Residues 910–920 show a composition bias toward polar residues; it reads HPNTTPRTFSR.

Interacts with ARAC11/ROP1. In terms of tissue distribution, expressed in pollen and pollen tubes.

The protein localises to the cell membrane. Functionally, acts as a GTPase activator for the Rac-type GTPase by converting it to an inactive GDP-bound state. Maintains the global inactivation of ARAC11/ROP1 at the apex in pollen tubes in order to regulate the polar cell growth. The protein is Rho GTPase-activating protein REN1 (REN1) of Arabidopsis thaliana (Mouse-ear cress).